Here is a 508-residue protein sequence, read N- to C-terminus: Sugar transport protein 12 (508 aa).

Over 1–22 (MPSVGIVIGDGKKEYPGKLTLY) the chain is Cytoplasmic. 12 helical membrane passes run 23-43 (VTVT…DIGI), 80-100 (VSLT…SLVA), 118-138 (VLFC…MLIV), 141-161 (LLLG…LSEM), 172-192 (IGFQ…NFFF), 201-221 (LSLG…LILP), 294-314 (LTGI…IGFG), 317-337 (AALI…VVSI), 347-367 (FLFL…AAAI), 383-403 (WYAI…AWSW), 426-446 (ITVS…LMML), and 451-471 (FGLF…VYLF). Over 472-508 (LPETRGVPIEEMNRVWRSHWYWSKFVDAEKNLTKVVI) the chain is Cytoplasmic.

Belongs to the major facilitator superfamily. Sugar transporter (TC 2.A.1.1) family.

It localises to the membrane. Functionally, mediates an active uptake of hexoses, probably by sugar/hydrogen symport. The chain is Sugar transport protein 12 (STP12) from Arabidopsis thaliana (Mouse-ear cress).